The following is a 663-amino-acid chain: Rho GTPase-activating protein 18 (663 aa).

Positions 15–37 (YHPSGKDQTVGNSHAKAGEEATS) are disordered. 2 positions are modified to phosphoserine: S66 and S69. A Phosphothreonine modification is found at T158. Disordered stretches follow at residues 179–227 (RESK…PAPE) and 243–277 (QKES…TRIG). Basic and acidic residues-rich tracts occupy residues 197 to 219 (NENK…KLIP) and 245 to 258 (ESSK…KGDD). Position 263 is a phosphoserine (S263). Residues 324–523 (VPLTALLEQD…LLIKYQKLLW (200 aa)) enclose the Rho-GAP domain. Residue S610 is modified to Phosphoserine.

As to quaternary structure, interacts with MPHOSPH6.

The protein resides in the cytoplasm. Functionally, rho GTPase activating protein that suppresses F-actin polymerization by inhibiting Rho. Rho GTPase activating proteins act by converting Rho-type GTPases to an inactive GDP-bound state. Plays a key role in tissue tension and 3D tissue shape by regulating cortical actomyosin network formation. Acts downstream of YAP1 and inhibits actin polymerization, which in turn reduces nuclear localization of YAP1. Regulates cell shape, spreading, and migration. The polypeptide is Rho GTPase-activating protein 18 (Homo sapiens (Human)).